We begin with the raw amino-acid sequence, 137 residues long: ATP synthase epsilon chain, chloroplastic (137 aa).

Belongs to the ATPase epsilon chain family. As to quaternary structure, F-type ATPases have 2 components, CF(1) - the catalytic core - and CF(0) - the membrane proton channel. CF(1) has five subunits: alpha(3), beta(3), gamma(1), delta(1), epsilon(1). CF(0) has three main subunits: a, b and c.

It localises to the plastid. The protein localises to the chloroplast thylakoid membrane. In terms of biological role, produces ATP from ADP in the presence of a proton gradient across the membrane. The sequence is that of ATP synthase epsilon chain, chloroplastic from Pinus koraiensis (Korean pine).